Consider the following 820-residue polypeptide: Leucine--tRNA ligase (820 aa).

A 'HIGH' region motif is present at residues proline 42 to histidine 52. The 'KMSKS' region signature appears at lysine 576–serine 580. Residue lysine 579 coordinates ATP.

Belongs to the class-I aminoacyl-tRNA synthetase family.

The protein resides in the cytoplasm. The enzyme catalyses tRNA(Leu) + L-leucine + ATP = L-leucyl-tRNA(Leu) + AMP + diphosphate. This Coxiella burnetii (strain CbuG_Q212) (Coxiella burnetii (strain Q212)) protein is Leucine--tRNA ligase.